The following is a 69-amino-acid chain: Cytochrome c oxidase subunit 8A, mitochondrial (69 aa).

The transit peptide at 1–25 (MSVLTPLLLRGLTGSARRLPVPRAQ) directs the protein to the mitochondrion. The SIFI-degron signature appears at 2–19 (SVLTPLLLRGLTGSARRL). The Mitochondrial matrix portion of the chain corresponds to 26-36 (VHSMPPEQKLG). The helical transmembrane segment at 37 to 60 (VLELAIGFTSCLVTFLLPAGWILS) threads the bilayer. The Mitochondrial intermembrane portion of the chain corresponds to 61–69 (HLDSYKKRG).

It belongs to the cytochrome c oxidase VIII family. Component of the cytochrome c oxidase (complex IV, CIV), a multisubunit enzyme composed of 14 subunits. The complex is composed of a catalytic core of 3 subunits MT-CO1, MT-CO2 and MT-CO3, encoded in the mitochondrial DNA, and 11 supernumerary subunits COX4I, COX5A, COX5B, COX6A, COX6B, COX6C, COX7A, COX7B, COX7C, COX8 and NDUFA4, which are encoded in the nuclear genome. The complex exists as a monomer or a dimer and forms supercomplexes (SCs) in the inner mitochondrial membrane with NADH-ubiquinone oxidoreductase (complex I, CI) and ubiquinol-cytochrome c oxidoreductase (cytochrome b-c1 complex, complex III, CIII), resulting in different assemblies (supercomplex SCI(1)III(2)IV(1) and megacomplex MCI(2)III(2)IV(2)). In terms of processing, in response to mitochondrial stress, the precursor protein is ubiquitinated by the SIFI complex in the cytoplasm before mitochondrial import, leading to its degradation. Within the SIFI complex, UBR4 initiates ubiquitin chain that are further elongated or branched by KCMF1.

It is found in the mitochondrion inner membrane. Its pathway is energy metabolism; oxidative phosphorylation. Component of the cytochrome c oxidase, the last enzyme in the mitochondrial electron transport chain which drives oxidative phosphorylation. The respiratory chain contains 3 multisubunit complexes succinate dehydrogenase (complex II, CII), ubiquinol-cytochrome c oxidoreductase (cytochrome b-c1 complex, complex III, CIII) and cytochrome c oxidase (complex IV, CIV), that cooperate to transfer electrons derived from NADH and succinate to molecular oxygen, creating an electrochemical gradient over the inner membrane that drives transmembrane transport and the ATP synthase. Cytochrome c oxidase is the component of the respiratory chain that catalyzes the reduction of oxygen to water. Electrons originating from reduced cytochrome c in the intermembrane space (IMS) are transferred via the dinuclear copper A center (CU(A)) of subunit 2 and heme A of subunit 1 to the active site in subunit 1, a binuclear center (BNC) formed by heme A3 and copper B (CU(B)). The BNC reduces molecular oxygen to 2 water molecules using 4 electrons from cytochrome c in the IMS and 4 protons from the mitochondrial matrix. The sequence is that of Cytochrome c oxidase subunit 8A, mitochondrial (COX8A) from Saimiri sciureus (Common squirrel monkey).